The following is a 156-amino-acid chain: 6,7-dimethyl-8-ribityllumazine synthase (156 aa).

Residues phenylalanine 22, 57–59 (AYE), and 81–83 (TVI) contribute to the 5-amino-6-(D-ribitylamino)uracil site. (2S)-2-hydroxy-3-oxobutyl phosphate is bound at residue 86–87 (GT). Histidine 89 serves as the catalytic Proton donor. 5-amino-6-(D-ribitylamino)uracil is bound at residue phenylalanine 114. Residue arginine 128 coordinates (2S)-2-hydroxy-3-oxobutyl phosphate.

This sequence belongs to the DMRL synthase family. In terms of assembly, forms an icosahedral capsid composed of 60 subunits, arranged as a dodecamer of pentamers.

The enzyme catalyses (2S)-2-hydroxy-3-oxobutyl phosphate + 5-amino-6-(D-ribitylamino)uracil = 6,7-dimethyl-8-(1-D-ribityl)lumazine + phosphate + 2 H2O + H(+). The protein operates within cofactor biosynthesis; riboflavin biosynthesis; riboflavin from 2-hydroxy-3-oxobutyl phosphate and 5-amino-6-(D-ribitylamino)uracil: step 1/2. Functionally, catalyzes the formation of 6,7-dimethyl-8-ribityllumazine by condensation of 5-amino-6-(D-ribitylamino)uracil with 3,4-dihydroxy-2-butanone 4-phosphate. This is the penultimate step in the biosynthesis of riboflavin. This chain is 6,7-dimethyl-8-ribityllumazine synthase, found in Erwinia tasmaniensis (strain DSM 17950 / CFBP 7177 / CIP 109463 / NCPPB 4357 / Et1/99).